We begin with the raw amino-acid sequence, 195 residues long: Dephospho-CoA kinase (195 aa).

The DPCK domain maps to 3 to 195 (IIGLTGSIAM…LFVIKSLLKN (193 aa)). 11-16 (AMGKST) serves as a coordination point for ATP.

The protein belongs to the CoaE family.

It is found in the cytoplasm. The enzyme catalyses 3'-dephospho-CoA + ATP = ADP + CoA + H(+). The protein operates within cofactor biosynthesis; coenzyme A biosynthesis; CoA from (R)-pantothenate: step 5/5. Its function is as follows. Catalyzes the phosphorylation of the 3'-hydroxyl group of dephosphocoenzyme A to form coenzyme A. This chain is Dephospho-CoA kinase, found in Bartonella henselae (strain ATCC 49882 / DSM 28221 / CCUG 30454 / Houston 1) (Rochalimaea henselae).